The chain runs to 494 residues: Probable capsid protein (494 aa).

The Nuclear localization signal motif lies at 120 to 123; that stretch reads RPKR. The segment at 418–435 adopts a CCHC-type zinc-finger fold; that stretch reads CRCWVCNIEGHYANECPN. The tract at residues 474 to 494 is disordered; sequence LSSSDSELDDTCEESSSEESE. A compositionally biased stretch (acidic residues) spans 479–494; that stretch reads SELDDTCEESSSEESE.

This sequence belongs to the caulimoviridae capsid protein family. As to quaternary structure, interacts (via nuclear localization signal) with host importin alpha.

It is found in the virion. The protein localises to the host nucleus. Its function is as follows. Self assembles to form an icosahedral capsid, about 50 nm in diameter, nm, composed of 420 subunits of the viral capsid protein. The capsid encapsulates the genomic dsDNA. Following virus entry into host cell, provides nuclear import of the viral genome. Virus particles do not enter the nucleus, but dock at the nuclear membrane through the interaction with host importins. The protein is Probable capsid protein of Dianthus caryophyllus (Carnation).